Consider the following 509-residue polypeptide: Histidine ammonia-lyase (509 aa).

The segment at residues 142 to 144 is a cross-link (5-imidazolinone (Ala-Gly)); sequence ASG. Ser143 carries the post-translational modification 2,3-didehydroalanine (Ser).

It belongs to the PAL/histidase family. Contains an active site 4-methylidene-imidazol-5-one (MIO), which is formed autocatalytically by cyclization and dehydration of residues Ala-Ser-Gly.

The protein resides in the cytoplasm. The catalysed reaction is L-histidine = trans-urocanate + NH4(+). The protein operates within amino-acid degradation; L-histidine degradation into L-glutamate; N-formimidoyl-L-glutamate from L-histidine: step 1/3. The sequence is that of Histidine ammonia-lyase from Pseudomonas aeruginosa (strain UCBPP-PA14).